We begin with the raw amino-acid sequence, 1248 residues long: Apoptotic protease-activating factor 1 (1248 aa).

Residues 1 to 90 (MDAKARNCLL…KDLAALLHDG (90 aa)) enclose the CARD domain. In terms of domain architecture, NB-ARC spans 104 to 415 (SGITSYVRTV…METEEVEDIL (312 aa)). ATP contacts are provided by residues 154–161 (GMAGCGKS) and Arg265. One copy of the WD 1-1 repeat lies at 613–652 (PHTDAVYHACFSEDGQRIASCGADKTLQVFKAETGEKLLE). Residues 655–694 (AHEDEVLCCAFSTDDRFIATCSVDKKVKIWNSMTGELVHT) form a WD 1-2 repeat. The WD 1-3 repeat unit spans residues 697–738 (EHSEQVNCCHFTNSSHHLLLATGSSDCFLKLWDLNQKECRNT). The stretch at 741–780 (GHTNSVNHCRFSPDDKLLASCSADGTLKLWDATSANERKS) is one WD 1-4 repeat. The stretch at 796–836 (DMEVIVKCCSWSADGARIMVAAKNKIFLFDIHTSGLLGEIH) is one WD 1-5 repeat. The stretch at 838–877 (GHHSTIQYCDFSPQNHLAVVALSQYCVELWNTDSRSKVAD) is one WD 1-6 repeat. A WD 1-7 repeat occupies 880–910 (GHLSWVHGVMFSPDGSSFLTSSDDQTIRLWE). Residues 910–921 (ETKKVCKNSAVM) form an interpropeller linker region. Residues 922–958 (LKQEVDVVFQENEVMVLAVDHIRRLQLINGRTGQIDY) form a WD 2-1 repeat. A WD 2-2 repeat occupies 959–998 (LTEAQVSCCCLSPHLQYIAFGDENGAIEILELVNNRIFQS). The WD 2-3 repeat unit spans residues 1001–1040 (QHKKTVWHIQFTADEKTLISSSDDAEIQVWNWQLDKCIFL). Residues 1042-1080 (GHQETVKDFRLLKNSRLLSWSFDGTVKVWNIITGNKEKD) form a WD 2-4 repeat. Residues 1083–1122 (CHQGTVLSCDISHDATKFSSTSADKTAKIWSFDLLLPLHE) form a WD 2-5 repeat. A WD 2-6 repeat occupies 1125–1164 (GHNGCVRCSAFSVDSTLLATGDDNGEIRIWNVSNGELLHL). The WD 2-7 repeat unit spans residues 1175 to 1212 (THGGWVTDLCFSPDGKMLISAGGYIKWWNVVTGESSQT). The WD 2-8 repeat unit spans residues 1213–1248 (FYTNGTNLKKIHVSPDFKTYVTVDNLGILYILQTLE).

In terms of assembly, monomer. Oligomerizes to a heptameric ring, known as the apoptosome, upon binding of cytochrome c and dATP. Oligomeric Apaf-1 and pro-caspase-9 bind to each other via their respective NH2-terminal CARD domains and consecutively mature caspase-9 is released from the complex. Pro-caspase-3 is recruited into the Apaf-1-pro-caspase-9 complex via interaction with pro-caspase-9. Interacts with APIP. Interacts (via CARD and NACHT domains) with NAIP/BIRC1 (via NACHT domain). Interacts with CIAO2A. As to expression, ubiquitous. Highest levels of expression in adult spleen and peripheral blood leukocytes, and in fetal brain, kidney and lung. Isoform 1 is expressed in heart, kidney and liver.

The protein localises to the cytoplasm. Oligomeric Apaf-1 mediates the cytochrome c-dependent autocatalytic activation of pro-caspase-9 (Apaf-3), leading to the activation of caspase-3 and apoptosis. This activation requires ATP. Isoform 6 is less effective in inducing apoptosis. The protein is Apoptotic protease-activating factor 1 of Homo sapiens (Human).